The primary structure comprises 493 residues: ATP-dependent rRNA helicase RRP3 (493 aa).

Basic and acidic residues-rich tracts occupy residues 26-42 (ALENQKKMQAASRKDSE) and 51-62 (ERPAKKQAKDEK). Positions 26–68 (ALENQKKMQAASRKDSESDSSDEEVERPAKKQAKDEKVEEPEE) are disordered. Positions 73–101 (ESFAQLNLVPELIQACQNLNFTKPTPIQA) match the Q motif motif. The Helicase ATP-binding domain occupies 104–276 (IPPALAGSDV…RASLTNPVKC (173 aa)). 117 to 124 (AQTGSGKT) serves as a coordination point for ATP. The short motif at 223–226 (DEAD) is the DEAD box element. The Helicase C-terminal domain maps to 307–453 (LLNEFIGKTV…NIILTLRDSV (147 aa)). Residues 467–493 (RNKEKQARGKGRRGRMMAKENMDREEK) form a disordered region. Residues 483-493 (MAKENMDREEK) are compositionally biased toward basic and acidic residues.

This sequence belongs to the DEAD box helicase family. DDX47/RRP3 subfamily. In terms of assembly, interacts with the SSU processome.

The protein localises to the nucleus. It carries out the reaction ATP + H2O = ADP + phosphate + H(+). Its function is as follows. ATP-dependent rRNA helicase required for pre-ribosomal RNA processing. Involved in the maturation of the 35S-pre-rRNA and to its cleavage to mature 18S rRNA. In Candida glabrata (strain ATCC 2001 / BCRC 20586 / JCM 3761 / NBRC 0622 / NRRL Y-65 / CBS 138) (Yeast), this protein is ATP-dependent rRNA helicase RRP3.